Reading from the N-terminus, the 498-residue chain is Glycerol kinase (498 aa).

Thr11 contacts ADP. ATP is bound by residues Thr11, Thr12, and Ser13. Thr11 contacts sn-glycerol 3-phosphate. An ADP-binding site is contributed by Arg15. Arg81, Glu82, Tyr133, and Asp242 together coordinate sn-glycerol 3-phosphate. Arg81, Glu82, Tyr133, Asp242, and Gln243 together coordinate glycerol. ADP-binding residues include Thr264 and Gly307. Thr264, Gly307, Gln311, and Gly411 together coordinate ATP. Gly411 is an ADP binding site.

This sequence belongs to the FGGY kinase family.

The catalysed reaction is glycerol + ATP = sn-glycerol 3-phosphate + ADP + H(+). Its pathway is polyol metabolism; glycerol degradation via glycerol kinase pathway; sn-glycerol 3-phosphate from glycerol: step 1/1. With respect to regulation, inhibited by fructose 1,6-bisphosphate (FBP). Functionally, key enzyme in the regulation of glycerol uptake and metabolism. Catalyzes the phosphorylation of glycerol to yield sn-glycerol 3-phosphate. This Afipia carboxidovorans (strain ATCC 49405 / DSM 1227 / KCTC 32145 / OM5) (Oligotropha carboxidovorans) protein is Glycerol kinase.